A 211-amino-acid polypeptide reads, in one-letter code: Transcriptional regulatory protein RcsA (211 aa).

The HTH luxR-type domain occupies Leu-135–Asp-200. Residues Thr-159–Gly-178 constitute a DNA-binding region (H-T-H motif).

The protein belongs to the RcsA family.

Functionally, component of the Rcs signaling system, which controls transcription of numerous genes. Binds to DNA to regulate expression of genes. In Pantoea stewartii subsp. stewartii (Erwinia stewartii), this protein is Transcriptional regulatory protein RcsA.